Reading from the N-terminus, the 102-residue chain is Large ribosomal subunit protein bL21 (102 aa).

This sequence belongs to the bacterial ribosomal protein bL21 family. In terms of assembly, part of the 50S ribosomal subunit. Contacts protein L20.

Its function is as follows. This protein binds to 23S rRNA in the presence of protein L20. The chain is Large ribosomal subunit protein bL21 from Bacillus pumilus (strain SAFR-032).